The following is a 255-amino-acid chain: F-box/SPRY domain-containing protein 1 (255 aa).

The F-box domain maps to 3–51 (DPVAALCNYNVLEVIFSYLELEDLNHCSQVCKSWYHFLNDENSDVWRWH). Residues 61–253 (LKSDLLASVS…VSMVYLGTPL (193 aa)) enclose the B30.2/SPRY domain.

The protein belongs to the FBXO45/Fsn family. Component of an E3 ubiquitin ligase complex composed of hiw and Fsn.

It is found in the synapse. The protein operates within protein modification; protein ubiquitination. Its function is as follows. Required in the presynaptic motoneuron to down-regulate the levels of wnd and restrain synaptic terminal growth at the neuromuscular junction (NMJ). The protein is F-box/SPRY domain-containing protein 1 of Drosophila yakuba (Fruit fly).